The primary structure comprises 746 residues: H(+)/Cl(-) exchange transporter 5 (746 aa).

Topologically, residues 1–54 (MDFLEEPIPGVGTYDDFNTIDWVREKSRDRDRHREITNRSKESTWALIHSVSDA) are cytoplasmic. A run of 2 helical transmembrane segments spans residues 55-92 (FSGW…ICTE) and 138-161 (VNYF…VKVF). The Selectivity filter part_1 motif lies at 167 to 171 (GSGIP). Ser-168 serves as a coordination point for chloride. The helical intramembrane region spans 170 to 177 (IPEIKTIL). The next 2 helical transmembrane spans lie at 186-205 (LGKW…VSSG) and 211-230 (EGPL…HCFN). The short motif at 209-213 (GKEGP) is the Selectivity filter part_2 element. 2 intramembrane regions (helical) span residues 242-254 (VLSA…VSVA) and 258-266 (PIGGVLFSL). The next 5 membrane-spanning stretches (helical) occupy residues 278 to 296 (LWRS…RSIN), 319 to 344 (LVPF…IAWC), 352 to 372 (LGKY…ILAF), 428 to 448 (MWQL…TFGM), and 453 to 472 (GLFI…LGVG). The Selectivity filter part_3 signature appears at 453–457 (GLFIP). Phe-455 lines the chloride pocket. The helical intramembrane region spans 500 to 514 (GLYAMVGAAACLGGV). Positions 515–517 (TRM) form an intramembrane region, note=Loop between two helices. The helical intramembrane region spans 518–529 (TVSLVVIMFELT). The segment at residues 530–534 (GGLEY) is an intramembrane region (note=Loop between two helices). Residues 535-552 (IVPLMAAAMTSKWVADAL) form a helical membrane-spanning segment. Residues 553-746 (GREGIYDAHI…NQDPDSILFN (194 aa)) are Cytoplasmic-facing. Residue Tyr-558 coordinates chloride. CBS domains are found at residues 586–650 (MKPR…ARKE) and 682–742 (ILDL…DPDS). Residues Thr-596, 617–619 (YSG), and 724–727 (TKKD) contribute to the ATP site.

Belongs to the chloride channel (TC 2.A.49) family. ClC-5/CLCN5 subfamily. In terms of assembly, interacts with NEDD4 and NEDD4L. Post-translationally, ubiquitinated by NEDD4L in the presence of albumin; which promotes endocytosis and proteasomal degradation. As to expression, detected in duodenum, jejunum and ileum. Detected in crypt and villus regions of the epithelium of the small intestine.

The protein localises to the golgi apparatus membrane. Its subcellular location is the endosome membrane. It is found in the cell membrane. The catalysed reaction is 2 chloride(in) + H(+)(out) = 2 chloride(out) + H(+)(in). Its function is as follows. Proton-coupled chloride transporter. Functions as antiport system and exchanges chloride ions against protons. Important for normal acidification of the endosome lumen. May play an important role in renal tubular function. The CLC channel family contains both chloride channels and proton-coupled anion transporters that exchange chloride or another anion for protons. The absence of conserved gating glutamate residues is typical for family members that function as channels. This is H(+)/Cl(-) exchange transporter 5 (CLCN5) from Cavia porcellus (Guinea pig).